A 131-amino-acid chain; its full sequence is uncharacterized protein (131 aa).

This is an uncharacterized protein from Mycobacterium tuberculosis (strain CDC 1551 / Oshkosh).